Here is a 78-residue protein sequence, read N- to C-terminus: Cytochrome c oxidase subunit 6b-3 (78 aa).

The CHCH domain occupies 22–65; that stretch reads TRHCFTRYIEFHRCTTAKGEDANECERFAKYYRALCPGEWVDKW. A Cx9C motif motif is present at residues 25–35; the sequence is CFTRYIEFHRC. 2 disulfides stabilise this stretch: Cys-25–Cys-57 and Cys-35–Cys-46. A Cx10C motif motif is present at residues 46-57; sequence CERFAKYYRALC.

It belongs to the cytochrome c oxidase subunit 6B (TC 3.D.4.8) family. In terms of tissue distribution, expressed in the whole plant.

Its subcellular location is the mitochondrion. In terms of biological role, this protein is one of the nuclear-coded polypeptide chains of cytochrome c oxidase, the terminal oxidase in mitochondrial electron transport. This protein may be one of the heme-binding subunits of the oxidase. The chain is Cytochrome c oxidase subunit 6b-3 (COX6B-3) from Arabidopsis thaliana (Mouse-ear cress).